A 378-amino-acid chain; its full sequence is Putative F-box protein At4g17565 (378 aa).

The 48-residue stretch at 16–63 (PKWSELCPDLLRSIFEQLSFTNLNRAKLVCRSWNSASRGCVPKRNQIP) folds into the F-box domain.

This chain is Putative F-box protein At4g17565, found in Arabidopsis thaliana (Mouse-ear cress).